A 212-amino-acid chain; its full sequence is Kynurenine formamidase (212 aa).

Substrate is bound at residue W18. H48, H52, and D54 together coordinate Zn(2+). H58 serves as the catalytic Proton donor/acceptor. Positions 160 and 172 each coordinate Zn(2+).

It belongs to the Cyclase 1 superfamily. KynB family. As to quaternary structure, homodimer. The cofactor is Zn(2+).

It catalyses the reaction N-formyl-L-kynurenine + H2O = L-kynurenine + formate + H(+). It participates in amino-acid degradation; L-tryptophan degradation via kynurenine pathway; L-kynurenine from L-tryptophan: step 2/2. In terms of biological role, catalyzes the hydrolysis of N-formyl-L-kynurenine to L-kynurenine, the second step in the kynurenine pathway of tryptophan degradation. The sequence is that of Kynurenine formamidase from Paraburkholderia xenovorans (strain LB400).